A 539-amino-acid polypeptide reads, in one-letter code: Sorting nexin-27 (539 aa).

A disordered region spans residues methionine 1–arginine 40. Residues asparagine 17–proline 39 show a composition bias toward gly residues. Residues valine 41–proline 134 form the PDZ domain. 2 positions are modified to phosphoserine: serine 49 and serine 60. Residues glutamine 159–tyrosine 267 enclose the PX domain. Positions serine 271–phenylalanine 360 constitute a Ras-associating domain. The interval serine 271–phenylalanine 360 is FERM-like region F1. The FERM-like region F2 stretch occupies residues asparagine 371–cysteine 419. Positions asparagine 423 to lysine 523 are FERM-like region F3.

In terms of assembly, core component of the SNX27-retromer, a multiprotein complex composed of SNX27, the WASH complex and the retromer complex. Interacts (via the FERM-like regions) with the WASH complex. Interacts with SNX1. Interacts with CYTIP. Interacts with DGKZ. Interacts with MCC. Interacts (via PDZ domain) with a number of target transmembrane proteins (via PDZ-binding motif): ABCC4, ADRB2, ARHGEF7, GRIA1, GRIA2, GRIN1, GRIN2A GRIN2C, KCNJ6, KCNJ9 and SLC2A1/GLUT1. Interacts (via PDZ domains) with SLC9A3; directs SLC9A3 membrane insertion from early endosomes to the plasma membrane. In terms of tissue distribution, expressed in cells of hematopoietic origin.

The protein resides in the early endosome membrane. It is found in the cytoplasm. Its subcellular location is the cytosol. In terms of biological role, involved in the retrograde transport from endosome to plasma membrane, a trafficking pathway that promotes the recycling of internalized transmembrane proteins. Following internalization, endocytosed transmembrane proteins are delivered to early endosomes and recycled to the plasma membrane instead of being degraded in lysosomes. SNX27 specifically binds and directs sorting of a subset of transmembrane proteins containing a PDZ-binding motif at the C-terminus: following interaction with target transmembrane proteins, associates with the retromer complex, preventing entry into the lysosomal pathway, and promotes retromer-tubule based plasma membrane recycling. SNX27 also binds with the WASH complex. Interacts with membranes containing phosphatidylinositol-3-phosphate (PtdIns(3P)). May participate in establishment of natural killer cell polarity. Recruits CYTIP to early endosomes. The protein is Sorting nexin-27 (Snx27) of Mus musculus (Mouse).